A 233-amino-acid polypeptide reads, in one-letter code: Eosinophil granule major basic protein 1 (233 aa).

A signal peptide spans 1–15 (MKLLLLLALLLGAVS). Positions 16–114 (TRHLKVDTSS…VKFFSRPGYK (99 aa)) are cleaved as a propeptide — acidic. The interval 24–96 (SSLQSLRGEE…SELDVSPEDI (73 aa)) is disordered. Residues 42–57 (AEGATREATAGALMPL) show a composition bias toward low complexity. The span at 58-93 (PEEEEMEGASGSEDDPEEEEEEEEEVEFSSELDVSP) shows a compositional bias: acidic residues. The region spanning 132–233 (WVCQRCYRGN…GKRRPFVCTY (102 aa)) is the C-type lectin domain. 2 disulfides stabilise this stretch: Cys134–Cys231 and Cys208–Cys223.

In terms of processing, nitrated.

It localises to the cytoplasmic granule. MBP may play some important roles in the allergic reactions and inflammations, since MBP is capable of releasing histamine from mast cells and damaging the epithelial cells of bronchial tubes. Antiparasitic and antibiotic. This chain is Eosinophil granule major basic protein 1 (MBP1), found in Cavia porcellus (Guinea pig).